The sequence spans 353 residues: Basic membrane protein C (353 aa).

Residues 1 to 16 (MFKRFIFITLSLLVFA) form the signal peptide. Cysteine 17 carries the N-palmitoyl cysteine lipid modification. Cysteine 17 carries S-diacylglycerol cysteine lipidation.

Belongs to the BMP lipoprotein family. In terms of assembly, monomer.

The protein resides in the cell inner membrane. Its function is as follows. May be part of an ABC-type nucleoside uptake system involved in the purine salvage pathway. This Borreliella burgdorferi (strain N40) (Borrelia burgdorferi) protein is Basic membrane protein C (bmpC).